The primary structure comprises 245 residues: Ubiquinone/menaquinone biosynthesis C-methyltransferase UbiE (245 aa).

Residues Thr71, Asp92, and 118 to 119 (DA) each bind S-adenosyl-L-methionine.

Belongs to the class I-like SAM-binding methyltransferase superfamily. MenG/UbiE family.

It carries out the reaction a 2-demethylmenaquinol + S-adenosyl-L-methionine = a menaquinol + S-adenosyl-L-homocysteine + H(+). It catalyses the reaction a 2-methoxy-6-(all-trans-polyprenyl)benzene-1,4-diol + S-adenosyl-L-methionine = a 5-methoxy-2-methyl-3-(all-trans-polyprenyl)benzene-1,4-diol + S-adenosyl-L-homocysteine + H(+). Its pathway is quinol/quinone metabolism; menaquinone biosynthesis; menaquinol from 1,4-dihydroxy-2-naphthoate: step 2/2. The protein operates within cofactor biosynthesis; ubiquinone biosynthesis. Methyltransferase required for the conversion of demethylmenaquinol (DMKH2) to menaquinol (MKH2) and the conversion of 2-polyprenyl-6-methoxy-1,4-benzoquinol (DDMQH2) to 2-polyprenyl-3-methyl-6-methoxy-1,4-benzoquinol (DMQH2). The protein is Ubiquinone/menaquinone biosynthesis C-methyltransferase UbiE of Neisseria meningitidis serogroup A / serotype 4A (strain DSM 15465 / Z2491).